The sequence spans 532 residues: Phosphoenolpyruvate carboxykinase (ATP) (532 aa).

The substrate site is built by Arg-60, Tyr-194, and Lys-200. ATP is bound by residues Lys-200, His-219, and Gly-237 to Thr-245. Mn(2+)-binding residues include Lys-200 and His-219. Residue Asp-258 participates in Mn(2+) binding. ATP contacts are provided by Glu-286, Arg-324, and Thr-449. Arg-324 serves as a coordination point for substrate.

The protein belongs to the phosphoenolpyruvate carboxykinase (ATP) family. Mn(2+) is required as a cofactor.

It is found in the cytoplasm. It catalyses the reaction oxaloacetate + ATP = phosphoenolpyruvate + ADP + CO2. The protein operates within carbohydrate biosynthesis; gluconeogenesis. Its function is as follows. Involved in the gluconeogenesis. Catalyzes the conversion of oxaloacetate (OAA) to phosphoenolpyruvate (PEP) through direct phosphoryl transfer between the nucleoside triphosphate and OAA. This is Phosphoenolpyruvate carboxykinase (ATP) from Roseobacter denitrificans (strain ATCC 33942 / OCh 114) (Erythrobacter sp. (strain OCh 114)).